Here is a 687-residue protein sequence, read N- to C-terminus: Polyphosphate kinase (687 aa).

N45 lines the ATP pocket. R375 and R405 together coordinate Mg(2+). The Phosphohistidine intermediate role is filled by H435. ATP is bound by residues Y472, R568, and H596.

This sequence belongs to the polyphosphate kinase 1 (PPK1) family. Requires Mg(2+) as cofactor. An intermediate of this reaction is the autophosphorylated ppk in which a phosphate is covalently linked to a histidine residue through a N-P bond.

It catalyses the reaction [phosphate](n) + ATP = [phosphate](n+1) + ADP. In terms of biological role, catalyzes the reversible transfer of the terminal phosphate of ATP to form a long-chain polyphosphate (polyP). The polypeptide is Polyphosphate kinase (Burkholderia cenocepacia (strain HI2424)).